We begin with the raw amino-acid sequence, 542 residues long: Probable quinate permease (542 aa).

The Cytoplasmic portion of the chain corresponds to 1-22 (MSILALVEDRPTPKEVYNWKIY). A helical membrane pass occupies residues 23 to 43 (LLAAVASFTSCMIGYDSAFIG). Over 44-74 (TTLALSSFREEFGFSTMSKTAVNLVSANIVS) the chain is Extracellular. Residues 75–95 (CYQAGAFFGAFFAYPIGHFWG) traverse the membrane as a helical segment. The Cytoplasmic segment spans residues 96 to 97 (RK). The chain crosses the membrane as a helical span at residues 98-118 (WGLLFAGTIFTLGAGLMLGAN). Topologically, residues 119–130 (GDRGLGLLYGGR) are extracellular. A helical membrane pass occupies residues 131 to 151 (VLAGLGVGAGSNITPIYISEM). Residues 152 to 159 (APPSIRGR) are Cytoplasmic-facing. A helical membrane pass occupies residues 160–180 (LVGVYELGWQIGGLVGFWINY). Residues 181–193 (GVSETLAPSHKQW) are Extracellular-facing. The helical transmembrane segment at 194–214 (IIPFAVQLIPSGLLLIGAVFL) threads the bilayer. Residues 215-285 (KESPRWLFSR…AGTNKKVMYR (71 aa)) are Cytoplasmic-facing. The chain crosses the membrane as a helical span at residues 286 to 306 (LFLGSMLFFWQNGSGINAINY). The Extracellular segment spans residues 307–325 (YSPTVFKSIGLHGANTSMF). A helical transmembrane segment spans residues 326–346 (STGIFGVVKTVVTFVWLLYLI). Residues 347-352 (DRLGRR) lie on the Cytoplasmic side of the membrane. The helical transmembrane segment at 353–373 (LLLLIGAAGAAVCLLIVGAYI) threads the bilayer. At 374–387 (KIADPASNPTQEMT) the chain is on the extracellular side. Residues 388-408 (GGGIAAMFFFYLYTVFYTPSW) traverse the membrane as a helical segment. Residues 409–456 (NGTPWVMNSEMFEPNMRSLAQACAAASNWLWNFLISRFTPQMFAKMEY) lie on the Cytoplasmic side of the membrane. Residues 457 to 477 (GVWFFFASLMLLSIVFVFFLV) form a helical membrane-spanning segment. The Extracellular segment spans residues 478-542 (PETKGIPLES…EHVSEDLPKV (65 aa)). A disordered region spans residues 523 to 542 (GYSKTGEQQVEHVSEDLPKV). The segment covering 531–542 (QVEHVSEDLPKV) has biased composition (basic and acidic residues).

The protein belongs to the major facilitator superfamily. Sugar transporter (TC 2.A.1.1) family. As to quaternary structure, interacts with creB. Ubiquitinated. Deubiquitinated by creB, probably to control its activity or amount.

It is found in the cell membrane. Functionally, integral membrane transporter that imports quinic acid to be catabolized as a carbon source. The protein is Probable quinate permease (qutD) of Aspergillus fumigatus (strain CBS 144.89 / FGSC A1163 / CEA10) (Neosartorya fumigata).